Consider the following 357-residue polypeptide: D-amino-acid oxidase (357 aa).

FAD is bound by residues A13, G14, S42, G47, R289, G315, and G318. R289 contributes to the D-proline binding site. R289 is a binding site for D-serine.

It belongs to the DAMOX/DASOX family. Requires FAD as cofactor.

The protein resides in the cytoplasm. The protein localises to the secreted. Its subcellular location is the cell wall. The enzyme catalyses a D-alpha-amino acid + O2 + H2O = a 2-oxocarboxylate + H2O2 + NH4(+). It carries out the reaction D-phenylalanine + O2 + H2O = 3-phenylpyruvate + H2O2 + NH4(+). It catalyses the reaction D-lysine + O2 + H2O = 6-amino-2-oxohexanoate + H2O2 + NH4(+). The catalysed reaction is D-methionine + O2 + H2O = 4-methylsulfanyl-2-oxobutanoate + H2O2 + NH4(+). The enzyme catalyses D-arginine + O2 + H2O = 5-guanidino-2-oxopentanoate + H2O2 + NH4(+). It carries out the reaction D-ornithine + O2 + H2O = 5-amino-2-oxopentanoate + H2O2 + NH4(+). It catalyses the reaction D-leucine + O2 + H2O = 4-methyl-2-oxopentanoate + H2O2 + NH4(+). The catalysed reaction is D-histidine + O2 + H2O = 3-(imidazol-5-yl)pyruvate + H2O2 + NH4(+). With respect to regulation, activated by manganese, copper, and iron ions. Inhibited by barium, aluminum, and zinc ions. Catalyzes the oxidative deamination of D-amino acids with broad substrate specificity. This Unknown prokaryotic organism protein is D-amino-acid oxidase.